Consider the following 355-residue polypeptide: Putative beta-lactamase HcpE (355 aa).

The signal sequence occupies residues 1–22 (MNIKILKILVGGLFFLSLNAHL). TPR repeat units lie at residues 27-60 (DNSF…GVSE), 63-96 (TQLG…DDRE), 98-131 (CFGL…LKHP), 132-166 (ESCY…DMAK), 202-240 (GQAC…NNSG), 245-275 (LGSM…MGSA), 276-311 (VSCS…MGDE), and 312-344 (VGCF…GMKQ). 9 disulfide bridges follow: C54–C62, C90–C98, C126–C134, C160–C168, C197–C205, C234–C242, C270–C278, C306–C314, and C338–C346.

The protein belongs to the hcp beta-lactamase family.

It is found in the secreted. It carries out the reaction a beta-lactam + H2O = a substituted beta-amino acid. May hydrolyze 6-aminopenicillinic acid and 7-aminocephalosporanic acid (ACA) derivatives. This chain is Putative beta-lactamase HcpE (hcpE), found in Helicobacter pylori (strain J99 / ATCC 700824) (Campylobacter pylori J99).